Consider the following 181-residue polypeptide: Aminoglycoside 2'-N-acetyltransferase (181 aa).

One can recognise an N-acetyltransferase domain in the interval Val-11–Asp-162. Substrate is bound by residues Asp-35 and Glu-82–Gly-83. Residues Val-84–Val-86 and Arg-91–Val-96 each bind CoA. Substrate is bound by residues Ser-117 and Asp-151 to Asp-152.

It belongs to the AAC(2')-I acetyltransferase family. Homodimer.

In terms of biological role, catalyzes the coenzyme A-dependent acetylation of the 2' hydroxyl or amino group of a broad spectrum of aminoglycosides. It confers resistance to aminoglycosides. The chain is Aminoglycoside 2'-N-acetyltransferase (aac) from Mycobacterium bovis (strain ATCC BAA-935 / AF2122/97).